A 151-amino-acid polypeptide reads, in one-letter code: Large ribosomal subunit protein bL9 (151 aa).

Belongs to the bacterial ribosomal protein bL9 family.

Its function is as follows. Binds to the 23S rRNA. In Rhodococcus jostii (strain RHA1), this protein is Large ribosomal subunit protein bL9.